Reading from the N-terminus, the 50-residue chain is uncharacterized protein (50 aa).

This is an uncharacterized protein from Haemophilus influenzae (strain ATCC 51907 / DSM 11121 / KW20 / Rd).